Reading from the N-terminus, the 386-residue chain is Porin PorA (386 aa).

The first 35 residues, 1–35 (MKRTLGHALIIIGAALIVIAVLLPTFLVPRLRVIP), serve as a signal peptide directing secretion. Residues 53–63 (DSSQLGKNEPT) are compositionally biased toward polar residues. The tract at residues 53–78 (DSSQLGKNEPTPNRKNDPRCKAETDE) is disordered. The segment covering 64 to 78 (PNRKNDPRCKAETDE) has biased composition (basic and acidic residues).

It belongs to the PorA family.

The protein resides in the secreted. The protein localises to the cell wall. Forms water-filled channels that favor the permeation of cations. The sequence is that of Porin PorA from Corynebacterium amycolatum.